Consider the following 192-residue polypeptide: Probable GTP-binding protein EngB (192 aa).

Positions 22–192 constitute an EngB-type G domain; sequence NLPQIVIVGR…QVLSIFEKYA (171 aa). GTP contacts are provided by residues 30 to 37, 57 to 61, 75 to 78, 142 to 145, and 173 to 175; these read GRSNVGKS, GKTRG, DLPG, TKAD, and FSA. Residues Ser-37 and Thr-59 each coordinate Mg(2+).

Belongs to the TRAFAC class TrmE-Era-EngA-EngB-Septin-like GTPase superfamily. EngB GTPase family. Mg(2+) serves as cofactor.

Necessary for normal cell division and for the maintenance of normal septation. The protein is Probable GTP-binding protein EngB of Thermoanaerobacter pseudethanolicus (strain ATCC 33223 / 39E) (Clostridium thermohydrosulfuricum).